The primary structure comprises 247 residues: Type III pantothenate kinase (247 aa).

Alanine 7–histidine 14 serves as a coordination point for ATP. Substrate contacts are provided by residues tyrosine 91 and glycine 95–arginine 98. The active-site Proton acceptor is the aspartate 97. K(+) is bound at residue aspartate 117. Threonine 120 serves as a coordination point for ATP.

The protein belongs to the type III pantothenate kinase family. In terms of assembly, homodimer. The cofactor is NH4(+). K(+) serves as cofactor.

The protein localises to the cytoplasm. It catalyses the reaction (R)-pantothenate + ATP = (R)-4'-phosphopantothenate + ADP + H(+). It participates in cofactor biosynthesis; coenzyme A biosynthesis; CoA from (R)-pantothenate: step 1/5. Its function is as follows. Catalyzes the phosphorylation of pantothenate (Pan), the first step in CoA biosynthesis. The protein is Type III pantothenate kinase of Synechococcus sp. (strain ATCC 27144 / PCC 6301 / SAUG 1402/1) (Anacystis nidulans).